Reading from the N-terminus, the 545-residue chain is MYCEKLILLLGCFWISSSASDPADPLLVDLPNGKLRGRDNGNYYSYESLPYAEPPVGDLRFEAPQPYKQQWTDTFDATQPPVLCMQWDQFIQGDDKLAGNEDCLTVSVYRPKNSSRNSFPVVAQIHGVAFMFGGASQNGHENFMREGNLILVKISYRLGPLGFVSTGDADLSGNFGLKDQRLALLWIKQNIASFGGEPENILVIGHSAGGGSVHLQVLREDFSKVAKAAISFSGNALDPWVVQQGGRGRAFELGRIVGCGQASDSVTLKKCLKSKPASEIVSAVRNFLVFAYVPFTPFGPVVESPEAPEAFISQHPIDIIKSGKFAQVPWAVTYTTEDGGYNAALLLEKQASSGRELIVDLNDRWFDWAPYLLFYRDSMTTIKDMDDYSRKLRQEYLGDRRFSVESYWDLQRLFTDVLFKNSTEISLDLHRKHGKSPVYAFVYDNPANTGIGQGLAKRTDINFGTVHGDDYFLIFENIVREPQLRSDEEIISRNFLKMLNDFVLSENGTLAFGTCDFQDNVGSSKLQLLSITRNGCENLELESFP.

An N-terminal signal peptide occupies residues 1–19; that stretch reads MYCEKLILLLGCFWISSSA. The cysteines at positions 84 and 103 are disulfide-linked. N113 is a glycosylation site (N-linked (GlcNAc...) asparagine). Residue S207 is the Acyl-ester intermediate of the active site. Cysteines 259 and 271 form a disulfide. N421 carries N-linked (GlcNAc...) asparagine glycosylation. H467 serves as the catalytic Charge relay system. N507 carries N-linked (GlcNAc...) asparagine glycosylation. C515 and C536 are joined by a disulfide.

The protein belongs to the type-B carboxylesterase/lipase family. As to quaternary structure, homodimer.

Its subcellular location is the secreted. It catalyses the reaction a carboxylic ester + H2O = an alcohol + a carboxylate + H(+). This is Esterase-5B (Est-5B) from Drosophila miranda (Fruit fly).